A 263-amino-acid chain; its full sequence is Hemin import ATP-binding protein HmuV (263 aa).

The ABC transporter domain maps to 2–242 (IEARDVSVDI…DLIEKVFDCR (241 aa)). Residue 34–41 (GPNGSGKT) coordinates ATP.

This sequence belongs to the ABC transporter superfamily. Heme (hemin) importer (TC 3.A.1.14.5) family. As to quaternary structure, the complex is composed of two ATP-binding proteins (HmuV), two transmembrane proteins (HmuU) and a solute-binding protein (HmuT).

The protein localises to the cell inner membrane. Functionally, part of the ABC transporter complex HmuTUV involved in hemin import. Responsible for energy coupling to the transport system. This chain is Hemin import ATP-binding protein HmuV, found in Mesorhizobium japonicum (strain LMG 29417 / CECT 9101 / MAFF 303099) (Mesorhizobium loti (strain MAFF 303099)).